Here is a 229-residue protein sequence, read N- to C-terminus: MKSSDIDQDLFTDSYCKVCSAQLISESQRVAHYESRKHASKVRLYYMLHPRDGGCPAKRLRSENGSDADMVDKNKCCTLCNMSFTSAVVADSHYQGKIHAKRLKLLLGEKTPLKTTATPLSPLKPPRMDTAPVVASPYQRRDSDRYCGLCAAWFNNPLMAQQHYDGKKHKKNAARVALLEQLGTTLDMGELRGLRRNYRCTICSVSLNSIEQYHAHLKGSKHQTNLKNK.

2 consecutive Matrin-type zinc fingers follow at residues 14–44 (SYCK…KVRL) and 72–106 (DKNK…LKLL). A disordered region spans residues 116–135 (TATPLSPLKPPRMDTAPVVA). Matrin-type zinc fingers lie at residues 145–175 (RYCG…NAAR) and 198–228 (YRCT…NLKN).

The protein resides in the nucleus. This chain is Zinc finger matrin-type protein 4 (ZMAT4), found in Homo sapiens (Human).